A 280-amino-acid polypeptide reads, in one-letter code: Eukaryotic translation initiation factor 3 subunit F-1 (280 aa).

An MPN domain is found at 8–138 (VRVHPVVLFQ…LRAYICIQLG (131 aa)).

This sequence belongs to the eIF-3 subunit F family. Component of the eukaryotic translation initiation factor 3 (eIF-3) complex. The eIF-3 complex interacts with pix.

It is found in the cytoplasm. Component of the eukaryotic translation initiation factor 3 (eIF-3) complex, which is involved in protein synthesis of a specialized repertoire of mRNAs and, together with other initiation factors, stimulates binding of mRNA and methionyl-tRNAi to the 40S ribosome. The eIF-3 complex specifically targets and initiates translation of a subset of mRNAs involved in cell proliferation. The chain is Eukaryotic translation initiation factor 3 subunit F-1 from Drosophila mojavensis (Fruit fly).